Consider the following 504-residue polypeptide: Glucosaminyl-phosphatidylinositol-acyltransferase PIGW (504 aa).

Residues 1–21 (MSEKQMKEAFVSNLNGTTVLE) lie on the Lumenal side of the membrane. The N-linked (GlcNAc...) asparagine glycan is linked to N15. Residues 22 to 42 (ITQGLCFPAFCILCRGFLIIF) form a helical membrane-spanning segment. The Cytoplasmic portion of the chain corresponds to 43 to 56 (SQYLCSFSPTWKTR). The chain crosses the membrane as a helical span at residues 57-75 (FLTDFVVLIVPMVATLTIW). The Lumenal portion of the chain corresponds to 76 to 81 (ASFILL). The helical transmembrane segment at 82 to 98 (ELLGVIIFGAGLLYQIY) threads the bilayer. Over 99–131 (RRRTCYARLPFLKILEKFLNISLESEYNPAISC) the chain is Cytoplasmic. The chain crosses the membrane as a helical span at residues 132 to 152 (FRVITSAFTAIAILAVDFPLF). The Lumenal portion of the chain corresponds to 153-162 (PRRFAKTELY). Residues 163–183 (GTGAMDFGVGGFVFGSAMVCL) form a helical membrane-spanning segment. Over 184-202 (EVRRRKYMEGSKLHYFTNS) the chain is Cytoplasmic. A helical membrane pass occupies residues 203 to 223 (LYSVWPLVFLGIGRLAIIKSI). Over 224–237 (GYQEHLTEYGVHWN) the chain is Lumenal. The helical transmembrane segment at 238 to 258 (FFFTIIVVKLITPLLLIIFPL) threads the bilayer. Topologically, residues 259-260 (NK) are cytoplasmic. The chain crosses the membrane as a helical span at residues 261-281 (SWIIALGITVLYQLALDFTSL). Topologically, residues 282–305 (KRLILYGTDGSGTRVGLLNANREG) are lumenal. A helical membrane pass occupies residues 306–326 (IISTLGYVAIHMAGVQTGLYM). Over 327–338 (HKNRSHIKDLIK) the chain is Cytoplasmic. Residues 339–359 (VACFLLLAAISLFISLYVVQV) traverse the membrane as a helical segment. Residues 360–370 (NVEAVSRRMAN) are Lumenal-facing. Residues 371–391 (LAFCIWIVASSLILLSSLLLG) form a helical membrane-spanning segment. The Cytoplasmic segment spans residues 392–448 (DIILSFAKFLIKGALVPCSWKLIQSPVTNKKHSESLVPEAERMEPSLCLITALNRKQ). S416 carries the phosphoserine modification. The helical transmembrane segment at 449–469 (LIFFLLSNITTGLINLMVDTL) threads the bilayer. Residues 470 to 473 (HSST) lie on the Lumenal side of the membrane. A helical membrane pass occupies residues 474 to 494 (LWALFVVNLYMFSNCLIVYVL). The Cytoplasmic portion of the chain corresponds to 495-504 (YLQDKTVQFW).

It belongs to the PIGW family.

It localises to the endoplasmic reticulum membrane. The protein operates within glycolipid biosynthesis; glycosylphosphatidylinositol-anchor biosynthesis. Acyltransferase that catalyzes the acyl transfer from an acyl-CoA at the 2-OH position of the inositol ring of glucosaminyl phosphatidylinositol (GlcN-PI) to generate glucosaminyl acyl phosphatidylinositol (GlcN-(acyl)PI) and participates in the fourth step of GPI-anchor biosynthesis. Required for the transport of GPI-anchored proteins to the plasma membrane. Acetylation during GPI-anchor biosynthesis is not essential for the subsequent mannosylation and is usually removed soon after the attachment of GPIs to proteins. The sequence is that of Glucosaminyl-phosphatidylinositol-acyltransferase PIGW from Homo sapiens (Human).